We begin with the raw amino-acid sequence, 125 residues long: Large ribosomal subunit protein bL12 (125 aa).

The protein belongs to the bacterial ribosomal protein bL12 family. Homodimer. Part of the ribosomal stalk of the 50S ribosomal subunit. Forms a multimeric L10(L12)X complex, where L10 forms an elongated spine to which 2 to 4 L12 dimers bind in a sequential fashion. Binds GTP-bound translation factors.

Forms part of the ribosomal stalk which helps the ribosome interact with GTP-bound translation factors. Is thus essential for accurate translation. This is Large ribosomal subunit protein bL12 from Thermus thermophilus (strain ATCC BAA-163 / DSM 7039 / HB27).